Consider the following 319-residue polypeptide: 1-aminocyclopropane-1-carboxylate oxidase 4 (319 aa).

Residues 153 to 253 (PNFGTKVSNY…RMSLASFYNP (101 aa)) enclose the Fe2OG dioxygenase domain. Histidine 177, aspartate 179, and histidine 234 together coordinate Fe cation.

This sequence belongs to the iron/ascorbate-dependent oxidoreductase family. It depends on Fe cation as a cofactor.

It catalyses the reaction 1-aminocyclopropane-1-carboxylate + L-ascorbate + O2 = ethene + L-dehydroascorbate + hydrogen cyanide + CO2 + 2 H2O. It functions in the pathway alkene biosynthesis; ethylene biosynthesis via S-adenosyl-L-methionine; ethylene from S-adenosyl-L-methionine: step 2/2. This chain is 1-aminocyclopropane-1-carboxylate oxidase 4 (ACO4), found in Petunia hybrida (Petunia).